The following is a 220-amino-acid chain: Protein ABA DEFICIENT 4, chloroplastic (220 aa).

The transit peptide at 1–37 directs the protein to the chloroplast; the sequence is MGFSSFISQPLSSSLSVMKRNVSAKRSELCLDSSKIR. A run of 4 helical transmembrane segments spans residues 77–97, 112–132, 154–174, and 195–215; these read IASS…TLMV, SVPY…SWTP, MFSS…VDLF, and SLCL…KAII.

Expressed in root vasculature, root hairs, leaves, trichomes, sepals, stamens, stigma, pedicels, siliques and embryo.

The protein resides in the plastid. It is found in the chloroplast membrane. Required for neoxanthin biosynthesis, an intermediary step in abscisic acid (ABA) biosynthesis. Probably not involved directly in the enzymatic conversion of violaxanthin to neoxanthin. Cannot convert violaxanthin to neoxanthin in vitro. Required for ABA biosynthesis in response to drought stress. Required for neoxanthin biosynthesis which is involved in photoprotection of photosystem II (PSII). Neoxanthin acts as an antioxidant within the photosystem PSII supercomplex. This is Protein ABA DEFICIENT 4, chloroplastic from Arabidopsis thaliana (Mouse-ear cress).